A 241-amino-acid polypeptide reads, in one-letter code: Ribonuclease 3 (241 aa).

The RNase III domain occupies 16–144; that stretch reads HAEFEKKINY…VIGAIFQDGG (129 aa). A Mg(2+)-binding site is contributed by E57. Catalysis depends on residues D61 and E133. E133 is a binding site for Mg(2+). The 70-residue stretch at 171–240 folds into the DRBM domain; sequence DAKSRLQEIL…AALAIKKIES (70 aa).

The protein belongs to the ribonuclease III family. As to quaternary structure, homodimer. Mg(2+) serves as cofactor.

It localises to the cytoplasm. It carries out the reaction Endonucleolytic cleavage to 5'-phosphomonoester.. Its function is as follows. Digests double-stranded RNA. Involved in the processing of primary rRNA transcript to yield the immediate precursors to the large and small rRNAs (23S and 16S). Processes some mRNAs, and tRNAs when they are encoded in the rRNA operon. Processes pre-crRNA and tracrRNA of type II CRISPR loci if present in the organism. The polypeptide is Ribonuclease 3 (Desulfotalea psychrophila (strain LSv54 / DSM 12343)).